Consider the following 842-residue polypeptide: Translation initiation factor IF-2 (842 aa).

Disordered stretches follow at residues 1–41 and 112–219; these read MVAK…GFPD and RPNR…QTYQ. Composition is skewed to basic and acidic residues over residues 32-41 and 153-165; these read PEDKKQGFPD and RRGE…RDFS. The 170-residue stretch at 328–497 folds into the tr-type G domain; the sequence is ARPPVVTVMG…MLQAEVMELR (170 aa). Residues 337–344 form a G1 region; sequence GHVDHGKT. Position 337–344 (337–344) interacts with GTP; that stretch reads GHVDHGKT. Positions 362–366 are G2; the sequence is GITQH. Residues 383-386 form a G3 region; the sequence is DTPG. GTP-binding positions include 383–387 and 437–440; these read DTPGH and NKID. Residues 437 to 440 form a G4 region; the sequence is NKID. A G5 region spans residues 473–475; it reads SAL.

Belongs to the TRAFAC class translation factor GTPase superfamily. Classic translation factor GTPase family. IF-2 subfamily.

The protein resides in the cytoplasm. In terms of biological role, one of the essential components for the initiation of protein synthesis. Protects formylmethionyl-tRNA from spontaneous hydrolysis and promotes its binding to the 30S ribosomal subunits. Also involved in the hydrolysis of GTP during the formation of the 70S ribosomal complex. The chain is Translation initiation factor IF-2 (infB) from Treponema pallidum (strain Nichols).